The sequence spans 121 residues: Small ribosomal subunit protein uS13 (121 aa).

A disordered region spans residues 97–121; that stretch reads VRGQRTRTNARTRRGARKTVAGKKK. Positions 100–121 are enriched in basic residues; sequence QRTRTNARTRRGARKTVAGKKK.

It belongs to the universal ribosomal protein uS13 family. As to quaternary structure, part of the 30S ribosomal subunit. Forms a loose heterodimer with protein S19. Forms two bridges to the 50S subunit in the 70S ribosome.

Functionally, located at the top of the head of the 30S subunit, it contacts several helices of the 16S rRNA. In the 70S ribosome it contacts the 23S rRNA (bridge B1a) and protein L5 of the 50S subunit (bridge B1b), connecting the 2 subunits; these bridges are implicated in subunit movement. Contacts the tRNAs in the A and P-sites. The polypeptide is Small ribosomal subunit protein uS13 (Synechococcus sp. (strain CC9605)).